The sequence spans 242 residues: MAGHSKWANIKHKKAAADAKRGKIWTRLIKEIQVAARLGGGDANSNPRLRLAVDKAADANMPKDNVKRAIDRGVGGADGANYEEIRYEGYGIGGAAIIVDTLTDNRTRTVAEVRHAFSKFGGNMGTDGSVAFMFDHVGQFLFAPGTSEDALMEAALEAGANDVNTNDDGSIEVLCDWQEFSKVKDALEAGGFKAELAEVTMKPQNEIEFTGEDAVKMQKLLDALENLDDVQDVYTNAVVIEE.

This sequence belongs to the TACO1 family.

Its subcellular location is the cytoplasm. This chain is Probable transcriptional regulatory protein BTH_I1015, found in Burkholderia thailandensis (strain ATCC 700388 / DSM 13276 / CCUG 48851 / CIP 106301 / E264).